A 453-amino-acid chain; its full sequence is Gamma-aminobutyric acid receptor subunit alpha-6 (453 aa).

Positions 1-19 (MASSLPWLCIILWLENALG) are cleaved as a signal peptide. The Extracellular portion of the chain corresponds to 20-243 (KLEVEGNFYS…FHLQRKMGYF (224 aa)). Asn-31 carries an N-linked (GlcNAc...) asparagine glycan. Residue Arg-84 coordinates 4-aminobutanoate. N-linked (GlcNAc...) asparagine glycans are attached at residues Asn-128 and Asn-141. Position 147 (Thr-147) interacts with 4-aminobutanoate. Cys-156 and Cys-170 are joined by a disulfide. A helical transmembrane segment spans residues 244-264 (MIQIYTPCIMTVILSQVSFWI). The Cytoplasmic segment spans residues 265–270 (NKESVP). The chain crosses the membrane as a helical span at residues 271–290 (ARTVFGITTVLTMTTLSISA). The Extracellular portion of the chain corresponds to 291 to 304 (RHSLPKVSYATAMD). The chain crosses the membrane as a helical span at residues 305–325 (WFIAVCFAFVFSALIEFAAVN). Topologically, residues 326–422 (YFTNLQTQKA…GTSKIDQYSR (97 aa)) are cytoplasmic. The residue at position 403 (Thr-403) is a Phosphothreonine. Residues 423 to 443 (ILFPVAFAGFNLVYWVVYLSK) form a helical membrane-spanning segment. Residues 444-453 (DTMEVSSSVE) are Extracellular-facing.

This sequence belongs to the ligand-gated ion channel (TC 1.A.9) family. Gamma-aminobutyric acid receptor (TC 1.A.9.5) subfamily. GABRA6 sub-subfamily. Heteropentamer, formed by a combination of alpha (GABRA1-6), beta (GABRB1-3), gamma (GABRG1-3), delta (GABRD), epsilon (GABRE), rho (GABRR1-3), pi (GABRP) and theta (GABRQ) chains, each subunit exhibiting distinct physiological and pharmacological properties. Binds UBQLN1. In terms of tissue distribution, expressed in brain, in cerebellar granule cells.

The protein resides in the postsynaptic cell membrane. It is found in the cell membrane. The catalysed reaction is chloride(in) = chloride(out). Alpha subunit of the heteropentameric ligand-gated chloride channel gated by gamma-aminobutyric acid (GABA), a major inhibitory neurotransmitter in the brain. GABA-gated chloride channels, also named GABA(A) receptors (GABAAR), consist of five subunits arranged around a central pore and contain GABA active binding site(s) located at the alpha and beta subunit interface(s). When activated by GABA, GABAARs selectively allow the flow of chloride anions across the cell membrane down their electrochemical gradient. Alpha-6/GABRA6 subunits are found at both synaptic and extrasynaptic sites. Chloride influx into the postsynaptic neuron following GABAAR opening decreases the neuron ability to generate a new action potential, thereby reducing nerve transmission. Extrasynaptic alpha-6-containing receptors contribute to the tonic GABAergic inhibition. Alpha-6 subunits are also present on glutamatergic synapses. This chain is Gamma-aminobutyric acid receptor subunit alpha-6, found in Homo sapiens (Human).